A 138-amino-acid polypeptide reads, in one-letter code: Cysteine desulfuration protein SufE (138 aa).

Residue C51 is the Cysteine persulfide intermediate of the active site.

The protein belongs to the SufE family. Homodimer. Interacts with SufS.

The protein resides in the cytoplasm. Its pathway is cofactor biosynthesis; iron-sulfur cluster biosynthesis. In terms of biological role, participates in cysteine desulfuration mediated by SufS. Cysteine desulfuration mobilizes sulfur from L-cysteine to yield L-alanine and constitutes an essential step in sulfur metabolism for biosynthesis of a variety of sulfur-containing biomolecules. Functions as a sulfur acceptor for SufS, by mediating the direct transfer of the sulfur atom from the S-sulfanylcysteine of SufS, an intermediate product of cysteine desulfuration process. This chain is Cysteine desulfuration protein SufE, found in Shigella flexneri serotype 5b (strain 8401).